We begin with the raw amino-acid sequence, 362 residues long: S-adenosylmethionine:tRNA ribosyltransferase-isomerase (362 aa).

It belongs to the QueA family. Monomer.

It localises to the cytoplasm. The catalysed reaction is 7-aminomethyl-7-carbaguanosine(34) in tRNA + S-adenosyl-L-methionine = epoxyqueuosine(34) in tRNA + adenine + L-methionine + 2 H(+). It functions in the pathway tRNA modification; tRNA-queuosine biosynthesis. In terms of biological role, transfers and isomerizes the ribose moiety from AdoMet to the 7-aminomethyl group of 7-deazaguanine (preQ1-tRNA) to give epoxyqueuosine (oQ-tRNA). The protein is S-adenosylmethionine:tRNA ribosyltransferase-isomerase of Xanthobacter autotrophicus (strain ATCC BAA-1158 / Py2).